A 351-amino-acid chain; its full sequence is Meiotically up-regulated gene 1 protein (351 aa).

The protein resides in the cytoplasm. In terms of biological role, required for correct meiotic chromosome segregation. The protein is Meiotically up-regulated gene 1 protein (mug1) of Schizosaccharomyces pombe (strain 972 / ATCC 24843) (Fission yeast).